A 769-amino-acid polypeptide reads, in one-letter code: Serine protease HtrA-like (769 aa).

Positions Met1 to Glu20 are enriched in basic residues. A disordered region spans residues Met1 to Gly388. Composition is skewed to basic and acidic residues over residues Phe21–Lys64, Leu71–Lys87, and Tyr96–Lys108. A compositionally biased stretch (polar residues) spans Tyr126–Thr139. The span at Asp140–Ser186 shows a compositional bias: basic and acidic residues. A compositionally biased stretch (polar residues) spans Gln247–Ser262. 2 stretches are compositionally biased toward basic and acidic residues: residues Gln264–Asp296 and Lys310–Asn330. Residues Ala331–His347 show a composition bias toward polar residues. Residues Arg348–Asn364 are compositionally biased toward basic and acidic residues. Residues Gln366–Gly388 are compositionally biased toward polar residues. A helical transmembrane segment spans residues Leu410 to Val430. Active-site charge relay system residues include His504, Asp534, and Ser619. The PDZ domain maps to Ile680–Asp733.

This sequence belongs to the peptidase S1C family.

The protein resides in the cell membrane. The polypeptide is Serine protease HtrA-like (Staphylococcus aureus (strain MRSA252)).